Reading from the N-terminus, the 633-residue chain is Probable extracellular metalloproteinase 3 (633 aa).

An N-terminal signal peptide occupies residues 1 to 18; sequence MHGLLLAGLLALPMNVLA. The propeptide occupies 19-246; sequence HPAEQHASNV…VHNVVDYVAS (228 aa). N-linked (GlcNAc...) asparagine glycosylation is present at Asn-410. His-429 provides a ligand contact to Zn(2+). Residue Glu-430 is part of the active site. His-433 is a Zn(2+) binding site. Asn-480 and Asn-622 each carry an N-linked (GlcNAc...) asparagine glycan.

It belongs to the peptidase M36 family. Requires Zn(2+) as cofactor.

The protein resides in the secreted. Secreted metalloproteinase probably acting as a virulence factor. The protein is Probable extracellular metalloproteinase 3 (MEP3) of Trichophyton verrucosum (strain HKI 0517).